Consider the following 354-residue polypeptide: Replication factor C subunit 5 (354 aa).

40 to 47 (YGPSGSGK) contacts ATP.

It belongs to the activator 1 small subunits family. In terms of assembly, heterotetramer of subunits RFC2, RFC3, RFC4 and RFC5 that can form a complex with RFC1. As to expression, expressed in roots, leaves, shoot apical meristem (SAM), flag leaves and panicles.

It is found in the nucleus. Functionally, may be involved in DNA replication and thus regulate cell proliferation. In Oryza sativa subsp. japonica (Rice), this protein is Replication factor C subunit 5 (RFC5).